A 597-amino-acid polypeptide reads, in one-letter code: Medium/long-chain-fatty-acid--CoA ligase FadD6 (597 aa).

Belongs to the ATP-dependent AMP-binding enzyme family.

The enzyme catalyses a medium-chain fatty acid + ATP + CoA = a medium-chain fatty acyl-CoA + AMP + diphosphate. It catalyses the reaction a long-chain fatty acid + ATP + CoA = a long-chain fatty acyl-CoA + AMP + diphosphate. The catalysed reaction is hexanoate + ATP + CoA = hexanoyl-CoA + AMP + diphosphate. It carries out the reaction octanoate + ATP + CoA = octanoyl-CoA + AMP + diphosphate. The enzyme catalyses decanoate + ATP + CoA = decanoyl-CoA + AMP + diphosphate. It catalyses the reaction dodecanoate + ATP + CoA = dodecanoyl-CoA + AMP + diphosphate. The catalysed reaction is tetradecanoate + ATP + CoA = tetradecanoyl-CoA + AMP + diphosphate. It carries out the reaction hexadecanoate + ATP + CoA = hexadecanoyl-CoA + AMP + diphosphate. The enzyme catalyses octadecanoate + ATP + CoA = octadecanoyl-CoA + AMP + diphosphate. It catalyses the reaction 9-decenoate + ATP + CoA = 9-decenoyl-CoA + AMP + diphosphate. The catalysed reaction is (9Z)-octadecenoate + ATP + CoA = (9Z)-octadecenoyl-CoA + AMP + diphosphate. It carries out the reaction 2-hydroxyhexadecanoate + ATP + CoA = 2-hydroxyhexadecanoyl-CoA + AMP + diphosphate. The enzyme catalyses 3-hydroxytetradecanoate + ATP + CoA = 3-hydroxytetradecanoyl-CoA + AMP + diphosphate. It catalyses the reaction 12-hydroxyoctadecanoate + ATP + CoA = 12-hydroxyoctadecanoyl-CoA + AMP + diphosphate. The catalysed reaction is 15-hydroxypentadecanoate + ATP + CoA = 15-hydroxypentadecanoyl-CoA + AMP + diphosphate. It carries out the reaction 16-hydroxyhexadecanoate + ATP + CoA = 16-hydroxyhexadecanoyl-CoA + AMP + diphosphate. The enzyme catalyses 2-methylhexadecanoate + ATP + CoA = 2-methylhexadecanoyl-CoA + AMP + diphosphate. It catalyses the reaction 3-methylundecanoate + ATP + CoA = 3-methylundecanoyl-CoA + AMP + diphosphate. The catalysed reaction is 12-methyltridecanoate + ATP + CoA = 12-methyltridecanoyl-CoA + AMP + diphosphate. It carries out the reaction 12-methyloctadecanoate + ATP + CoA = 12-methyloctadecanoyl-CoA + AMP + diphosphate. In terms of biological role, catalyzes the activation of medium/long-chain fatty acids as acyl-coenzyme A (acyl-CoA). May play a role in the uptake of fatty acids by trapping them metabolically as CoA esters. May also play an important role in the channeling of fatty acids into triacylglycerol (TAG) for use by Mycobacterium during its dormancy. This Mycobacterium tuberculosis (strain ATCC 25618 / H37Rv) protein is Medium/long-chain-fatty-acid--CoA ligase FadD6.